Reading from the N-terminus, the 892-residue chain is Microsomal triglyceride transfer protein homolog (892 aa).

An N-terminal signal peptide occupies residues 1-19 (MFSSRIWLLLAVTVGVCLA).

In terms of assembly, heterodimer; heterodimerizes with protein disulfide isomerase.

It is found in the endoplasmic reticulum. Catalyzes the transport of cholesteryl ester, and phospholipid between phospholipid surfaces. Does not catalyze transport of triglycerides. Required for the assembly and secretion of plasma lipoproteins that contain apolipoprotein B. Required for normal expression of klf-3. The chain is Microsomal triglyceride transfer protein homolog from Caenorhabditis elegans.